The sequence spans 313 residues: Ribosomal RNA small subunit methyltransferase H (313 aa).

S-adenosyl-L-methionine-binding positions include 35–37 (GGH), D55, F79, D101, and Q108.

The protein belongs to the methyltransferase superfamily. RsmH family.

It localises to the cytoplasm. It carries out the reaction cytidine(1402) in 16S rRNA + S-adenosyl-L-methionine = N(4)-methylcytidine(1402) in 16S rRNA + S-adenosyl-L-homocysteine + H(+). Specifically methylates the N4 position of cytidine in position 1402 (C1402) of 16S rRNA. This Enterobacter sp. (strain 638) protein is Ribosomal RNA small subunit methyltransferase H.